Reading from the N-terminus, the 232-residue chain is MDAVAAEPVVAPVLPLPAQVRDLGMQDYVPVWRAMQRFTDTRDEHTGDELWVVEHAPVFTLGQAGKPEHVLAPGEIPVLQVDRGGQVTYHGPGQLVVYPLLDLRRLRIGVRDYVCKIEQALIDTLGEWNIIAERRDGAPGVYVGGAKIAALGIRVRRGCTFHGLSFNVAMDLEPFHRINPCGYQGLQVTSVLDLGGPSGMDAVKAVLLDQLARQFGLVLQPTSALPDLSLPA.

Positions 44 to 219 constitute a BPL/LPL catalytic domain; it reads EHTGDELWVV…QLARQFGLVL (176 aa). Substrate is bound by residues 83 to 90, 150 to 152, and 163 to 165; these read RGGQVTYH, ALG, and GLS. Cysteine 181 functions as the Acyl-thioester intermediate in the catalytic mechanism.

Belongs to the LipB family.

Its subcellular location is the cytoplasm. It catalyses the reaction octanoyl-[ACP] + L-lysyl-[protein] = N(6)-octanoyl-L-lysyl-[protein] + holo-[ACP] + H(+). Its pathway is protein modification; protein lipoylation via endogenous pathway; protein N(6)-(lipoyl)lysine from octanoyl-[acyl-carrier-protein]: step 1/2. Its function is as follows. Catalyzes the transfer of endogenously produced octanoic acid from octanoyl-acyl-carrier-protein onto the lipoyl domains of lipoate-dependent enzymes. Lipoyl-ACP can also act as a substrate although octanoyl-ACP is likely to be the physiological substrate. The chain is Octanoyltransferase from Xanthomonas campestris pv. campestris (strain B100).